The following is a 292-amino-acid chain: 11-beta-hydroxysteroid dehydrogenase 1 (292 aa).

The Cytoplasmic segment spans residues 1–7 (MAFMKKY). Residues 8–24 (LLPILGIFLAYYYYSAN) form a helical; Signal-anchor for type II membrane protein membrane-spanning segment. Residues 25-292 (EEFRPEMLRG…KYNMERFINN (268 aa)) lie on the Lumenal side of the membrane. Residues 41-67 (GASK…TARS) and 92-93 (TM) contribute to the NADP(+) site. N-linked (GlcNAc...) asparagine glycosylation is present at Asn95. 119 to 121 (NHI) is a binding site for NADP(+). Ser170 is a substrate binding site. Tyr183 serves as the catalytic Proton acceptor. Residue 183–187 (YSASK) coordinates NADP(+). The N-linked (GlcNAc...) asparagine glycan is linked to Asn207. Residues 216 to 222 (GLIDTDT) and 218 to 222 (IDTDT) each bind NADP(+).

This sequence belongs to the short-chain dehydrogenases/reductases (SDR) family. In terms of assembly, homodimer. In terms of tissue distribution, liver, kidney, lung, hypothalamus, anterior pituitary and placenta.

It is found in the endoplasmic reticulum membrane. It carries out the reaction an 11beta-hydroxysteroid + NADP(+) = an 11-oxosteroid + NADPH + H(+). The catalysed reaction is corticosterone + NADP(+) = 11-dehydrocorticosterone + NADPH + H(+). The enzyme catalyses cortisone + NADPH + H(+) = cortisol + NADP(+). It catalyses the reaction a 7beta-hydroxysteroid + NADP(+) = a 7-oxosteroid + NADPH + H(+). It carries out the reaction 7-oxocholesterol + NADPH + H(+) = 7beta-hydroxycholesterol + NADP(+). The catalysed reaction is chenodeoxycholate + NADP(+) = 7-oxolithocholate + NADPH + H(+). The enzyme catalyses 7-oxolithocholate + NADPH + H(+) = ursodeoxycholate + NADP(+). It catalyses the reaction glycochenodeoxycholate + NADP(+) = 7-oxoglycolithocholate + NADPH + H(+). It carries out the reaction taurochenodeoxycholate + NADP(+) = 7-oxotaurolithocholate + NADPH + H(+). The catalysed reaction is tauroursodeoxycholate + NADP(+) = 7-oxotaurolithocholate + NADPH + H(+). The enzyme catalyses glycoursodeoxycholate + NADP(+) = 7-oxoglycolithocholate + NADPH + H(+). It catalyses the reaction 7-oxopregnenolone + NADPH + H(+) = 7beta-hydroxypregnenolone + NADP(+). It carries out the reaction 3beta,7alpha-dihydroxyandrost-5-en-17-one + NADP(+) = 3beta-hydroxy-5-androstene-7,17-dione + NADPH + H(+). The catalysed reaction is 3beta-hydroxy-5-androstene-7,17-dione + NADPH + H(+) = 3beta,7beta-dihydroxyandrost-5-en-17-one + NADP(+). The enzyme catalyses 3beta-hydroxy-5alpha-androstane-7,17-dione + NADPH + H(+) = 3beta,7beta-dihydroxy-5alpha-androstan-17-one + NADP(+). Functionally, controls the reversible conversion of biologically active glucocorticoids such as cortisone to cortisol, and 11-dehydrocorticosterone to corticosterone in the presence of NADP(H). Participates in the corticosteroid receptor-mediated anti-inflammatory response, as well as metabolic and homeostatic processes. Plays a role in the secretion of aqueous humor in the eye, maintaining a normotensive, intraocular environment. Bidirectional in vitro, predominantly functions as a reductase in vivo, thereby increasing the concentration of active glucocorticoids. It has broad substrate specificity, besides glucocorticoids, it accepts other steroid and sterol substrates. Interconverts 7-oxo- and 7-hydroxy-neurosteroids such as 7-oxopregnenolone and 7beta-hydroxypregnenolone, 7-oxodehydroepiandrosterone (3beta-hydroxy-5-androstene-7,17-dione) and 7beta-hydroxydehydroepiandrosterone (3beta,7beta-dihydroxyandrost-5-en-17-one), among others. Catalyzes the stereo-specific conversion of the major dietary oxysterol, 7-ketocholesterol (7-oxocholesterol), into the more polar 7-beta-hydroxycholesterol metabolite. 7-oxocholesterol is one of the most important oxysterols, it participates in several events such as induction of apoptosis, accumulation in atherosclerotic lesions, lipid peroxidation, and induction of foam cell formation. Mediates the 7-oxo reduction of 7-oxolithocholate mainly to chenodeoxycholate, and to a lesser extent to ursodeoxycholate, both in its free form and when conjugated to glycine or taurine, providing a link between glucocorticoid activation and bile acid metabolism. Catalyzes the synthesis of 7-beta-25-dihydroxycholesterol from 7-oxo-25-hydroxycholesterol in vitro, which acts as a ligand for the G-protein-coupled receptor (GPCR) Epstein-Barr virus-induced gene 2 (EBI2) and may thereby regulate immune cell migration. This is 11-beta-hydroxysteroid dehydrogenase 1 (HSD11B1) from Ovis aries (Sheep).